The chain runs to 484 residues: D-aminoacylase (484 aa).

It belongs to the metallo-dependent hydrolases superfamily. N-acyl-D-amino-acid deacylase family. Zn(2+) serves as cofactor.

The protein localises to the cytoplasm. The catalysed reaction is an N-acyl-D-amino acid + H2O = a D-alpha-amino acid + a carboxylate. Functionally, has a wide specificity; hydrolyzes N-acyl derivative of neutral D-amino acids. In Alcaligenes xylosoxydans xylosoxydans (Achromobacter xylosoxidans), this protein is D-aminoacylase (dan).